Reading from the N-terminus, the 416-residue chain is Creatine kinase U-type, mitochondrial (416 aa).

Residues 1-39 (MAGPFSRLLSARPGLRLLALAGAGSLAAGFLLRSEPVRA) constitute a mitochondrion transit peptide. A cardiolipin-binding region spans residues 40–64 (ASERRRLYPPSAEYPDLRKHNNCMA). The Phosphagen kinase N-terminal domain maps to 45–131 (RLYPPSAEYP…FDPVIQERHN (87 aa)). Position 151 is a phosphoserine (Ser-151). The region spanning 158–400 (YVLSSRVRTG…NFLIDCERRL (243 aa)) is the Phosphagen kinase C-terminal domain. Residue 161-165 (SSRVR) coordinates ATP. At Ser-196 the chain carries Phosphoserine. Thr-213 carries the phosphothreonine modification. Residue His-224 participates in ATP binding. At Ser-232 the chain carries Phosphoserine. Residues Arg-269, Arg-325, and 353 to 358 (RGTGGV) contribute to the ATP site. Thr-355 bears the Phosphothreonine mark. The residue at position 365 (Ser-365) is a Phosphoserine. Asp-368 lines the ATP pocket.

The protein belongs to the ATP:guanido phosphotransferase family. As to quaternary structure, exists as an octamer composed of four MTCK homodimers.

The protein resides in the mitochondrion inner membrane. The catalysed reaction is creatine + ATP = N-phosphocreatine + ADP + H(+). Its function is as follows. Reversibly catalyzes the transfer of phosphate between ATP and various phosphogens (e.g. creatine phosphate). Creatine kinase isoenzymes play a central role in energy transduction in tissues with large, fluctuating energy demands, such as skeletal muscle, heart, brain and spermatozoa. This is Creatine kinase U-type, mitochondrial (CKMT1) from Bos taurus (Bovine).